Here is a 294-residue protein sequence, read N- to C-terminus: N-acetylmuramic acid 6-phosphate etherase (294 aa).

Residues 54-217 (VIKSFEEEGR…STASMIGVGK (164 aa)) enclose the SIS domain. Residue E82 is the Proton donor of the active site. E113 is a catalytic residue.

Belongs to the GCKR-like family. MurNAc-6-P etherase subfamily. As to quaternary structure, homodimer.

It carries out the reaction N-acetyl-D-muramate 6-phosphate + H2O = N-acetyl-D-glucosamine 6-phosphate + (R)-lactate. The protein operates within amino-sugar metabolism; N-acetylmuramate degradation. Its function is as follows. Specifically catalyzes the cleavage of the D-lactyl ether substituent of MurNAc 6-phosphate, producing GlcNAc 6-phosphate and D-lactate. The chain is N-acetylmuramic acid 6-phosphate etherase from Bacillus cereus (strain G9842).